The primary structure comprises 265 residues: Bidirectional sugar transporter SWEET7b (265 aa).

Residues Met1 to Asn9 lie on the Extracellular side of the membrane. A helical transmembrane segment spans residues Met10 to Phe30. Residues Met10–Lys97 form the MtN3/slv 1 domain. At Tyr31 to Asp45 the chain is on the cytoplasmic side. The helical transmembrane segment at Pro46–His66 threads the bilayer. Residues Pro67–Ser69 lie on the Extracellular side of the membrane. Residues Ile70 to Phe90 form a helical membrane-spanning segment. Residues Phe91 to Lys101 lie on the Cytoplasmic side of the membrane. Residues Met102 to Leu122 traverse the membrane as a helical segment. At Gly123–Ser131 the chain is on the extracellular side. The chain crosses the membrane as a helical span at residues Leu132–Ile152. The region spanning Ile133–Arg215 is the MtN3/slv 2 domain. Residues Met153–Met165 lie on the Cytoplasmic side of the membrane. A helical membrane pass occupies residues Pro166 to Ile186. Over Arg187–Asp189 the chain is Extracellular. A helical membrane pass occupies residues Ile190 to Tyr210. Residues Ala211–Leu265 are Cytoplasmic-facing.

The protein belongs to the SWEET sugar transporter family. As to quaternary structure, forms homooligomers and/or heterooligomers.

Its subcellular location is the cell membrane. Functionally, mediates both low-affinity uptake and efflux of sugar across the plasma membrane. This chain is Bidirectional sugar transporter SWEET7b (SWEET7B), found in Oryza sativa subsp. japonica (Rice).